We begin with the raw amino-acid sequence, 271 residues long: Tryptophan synthase alpha chain (271 aa).

Active-site proton acceptor residues include Glu49 and Asp60.

It belongs to the TrpA family. Tetramer of two alpha and two beta chains.

It catalyses the reaction (1S,2R)-1-C-(indol-3-yl)glycerol 3-phosphate + L-serine = D-glyceraldehyde 3-phosphate + L-tryptophan + H2O. It functions in the pathway amino-acid biosynthesis; L-tryptophan biosynthesis; L-tryptophan from chorismate: step 5/5. Its function is as follows. The alpha subunit is responsible for the aldol cleavage of indoleglycerol phosphate to indole and glyceraldehyde 3-phosphate. This chain is Tryptophan synthase alpha chain, found in Burkholderia mallei (strain NCTC 10247).